A 292-amino-acid chain; its full sequence is Aquaporin PIP1-3/PIP1-4 (292 aa).

Positions 1-42 (MEGKEEDVRLGANKFSERQPIGTAAQGAGAGDDDKDYKEPPP) are disordered. A run of 2 helical transmembrane segments spans residues 61–81 (IAEF…VMGV) and 96–118 (IAWS…SGGH). Positions 120–122 (NPA) match the NPA 1 motif. 3 helical membrane-spanning segments follow: residues 139–159 (IFYI…VKGF), 181–201 (GDGL…VFSA), and 215–235 (ILAP…TIPI). Positions 241–243 (NPA) match the NPA 2 motif. Residues 263 to 283 (IFWVGPFIGAALAAIYHQVII) traverse the membrane as a helical segment.

This sequence belongs to the MIP/aquaporin (TC 1.A.8) family. PIP (TC 1.A.8.11) subfamily.

It localises to the cell membrane. Aquaporins facilitate the transport of water and small neutral solutes across cell membranes. This is Aquaporin PIP1-3/PIP1-4 (PIP1-3) from Zea mays (Maize).